The chain runs to 118 residues: Large ribosomal subunit protein uL18 (118 aa).

Belongs to the universal ribosomal protein uL18 family. In terms of assembly, part of the 50S ribosomal subunit; part of the 5S rRNA/L5/L18/L25 subcomplex. Contacts the 5S and 23S rRNAs.

This is one of the proteins that bind and probably mediate the attachment of the 5S RNA into the large ribosomal subunit, where it forms part of the central protuberance. This chain is Large ribosomal subunit protein uL18, found in Sulfurimonas denitrificans (strain ATCC 33889 / DSM 1251) (Thiomicrospira denitrificans (strain ATCC 33889 / DSM 1251)).